Here is a 143-residue protein sequence, read N- to C-terminus: Putative pre-16S rRNA nuclease (143 aa).

This sequence belongs to the YqgF nuclease family.

It is found in the cytoplasm. Functionally, could be a nuclease involved in processing of the 5'-end of pre-16S rRNA. The polypeptide is Putative pre-16S rRNA nuclease (Leuconostoc mesenteroides subsp. mesenteroides (strain ATCC 8293 / DSM 20343 / BCRC 11652 / CCM 1803 / JCM 6124 / NCDO 523 / NBRC 100496 / NCIMB 8023 / NCTC 12954 / NRRL B-1118 / 37Y)).